The chain runs to 371 residues: Peptide chain release factor 2 (371 aa).

Q253 is modified (N5-methylglutamine).

This sequence belongs to the prokaryotic/mitochondrial release factor family. Post-translationally, methylated by PrmC. Methylation increases the termination efficiency of RF2.

Its subcellular location is the cytoplasm. Functionally, peptide chain release factor 2 directs the termination of translation in response to the peptide chain termination codons UGA and UAA. In Mycobacterium marinum (strain ATCC BAA-535 / M), this protein is Peptide chain release factor 2.